Here is a 430-residue protein sequence, read N- to C-terminus: Tol-Pal system protein TolB (430 aa).

An N-terminal signal peptide occupies residues 1-21; the sequence is MKQALRVAFGFLILWASVLHA.

The protein belongs to the TolB family. The Tol-Pal system is composed of five core proteins: the inner membrane proteins TolA, TolQ and TolR, the periplasmic protein TolB and the outer membrane protein Pal. They form a network linking the inner and outer membranes and the peptidoglycan layer.

Its subcellular location is the periplasm. In terms of biological role, part of the Tol-Pal system, which plays a role in outer membrane invagination during cell division and is important for maintaining outer membrane integrity. TolB occupies a key intermediary position in the Tol-Pal system because it communicates directly with both membrane-embedded components, Pal in the outer membrane and TolA in the inner membrane. The sequence is that of Tol-Pal system protein TolB from Shigella boydii serotype 4 (strain Sb227).